A 277-amino-acid polypeptide reads, in one-letter code: Large ribosomal subunit protein uL2 (277 aa).

The segment at 199-277 (DHMNTSVGKA…ILISRHKRKK (79 aa)) is disordered. Basic residues predominate over residues 209-220 (GRTRWMGRRPHN).

The protein belongs to the universal ribosomal protein uL2 family. In terms of assembly, part of the 50S ribosomal subunit. Forms a bridge to the 30S subunit in the 70S ribosome.

Its function is as follows. One of the primary rRNA binding proteins. Required for association of the 30S and 50S subunits to form the 70S ribosome, for tRNA binding and peptide bond formation. It has been suggested to have peptidyltransferase activity; this is somewhat controversial. Makes several contacts with the 16S rRNA in the 70S ribosome. The sequence is that of Large ribosomal subunit protein uL2 from Nitrobacter winogradskyi (strain ATCC 25391 / DSM 10237 / CIP 104748 / NCIMB 11846 / Nb-255).